Here is a 274-residue protein sequence, read N- to C-terminus: Aliphatic sulfonates import ATP-binding protein SsuB 2 (274 aa).

In terms of domain architecture, ABC transporter spans 21–235 (VQLRNVVRQF…DSGQAGFQLI (215 aa)). 53 to 60 (GASGSGKT) lines the ATP pocket.

Belongs to the ABC transporter superfamily. Aliphatic sulfonates importer (TC 3.A.1.17.2) family. The complex is composed of two ATP-binding proteins (SsuB), two transmembrane proteins (SsuC) and a solute-binding protein (SsuA).

It localises to the cell inner membrane. The enzyme catalyses ATP + H2O + aliphatic sulfonate-[sulfonate-binding protein]Side 1 = ADP + phosphate + aliphatic sulfonateSide 2 + [sulfonate-binding protein]Side 1.. Part of the ABC transporter complex SsuABC involved in aliphatic sulfonates import. Responsible for energy coupling to the transport system. The protein is Aliphatic sulfonates import ATP-binding protein SsuB 2 of Pseudomonas syringae pv. syringae (strain B728a).